The chain runs to 705 residues: Probable glutamate carboxypeptidase AMP1 (705 aa).

At 1–24 (MSQPLTTRPTVTGISIIPFRQPPP) the chain is on the cytoplasmic side. Residues 25 to 42 (LCSFLFVIVLFVATFYTL) form a helical; Signal-anchor for type II membrane protein membrane-spanning segment. The Extracellular portion of the chain corresponds to 43–705 (HHPDAVTPPL…ASKALKGGFT (663 aa)). Residues Asn-74, Asn-137, and Asn-322 are each glycosylated (N-linked (GlcNAc...) asparagine). Residues 255–548 (GVVGGEKLSL…GIWGLLGILL (294 aa)) form a catalytic region. Zn(2+) is bound by residues His-356 and Asp-366. The active-site Nucleophile is the Glu-403. Residues Glu-404, Asp-432, and His-514 each coordinate Zn(2+). A glycan (N-linked (GlcNAc...) asparagine) is linked at Asn-676.

Belongs to the peptidase M28 family. M28B subfamily. Zn(2+) serves as cofactor. Expressed in all plant parts. Highest levels in the bolt stem, inflorescence, root and silique. Low level in leaves.

The protein resides in the endoplasmic reticulum membrane. The enzyme catalyses Release of an unsubstituted, C-terminal glutamyl residue, typically from Ac-Asp-Glu or folylpoly-gamma-glutamates.. May modulate the level of one or more small signaling molecules that have a role in regulating meristem function. May play a role in balancing and restricting the meristem-promoting activity of auxin signaling. Involved in ethylene and giberellin (GA) signaling pathways or in a parallel pathway controlling cell and hypocotyl elongation and cellular organization. Involved in abscisic acid (ABA) signaling pathway. Plays a negative role in ABA-mediated seed germination and seedling development. Acts in association with LAMP1 to suppress ectopic stem cell niche formation in the shoot apical meristem (SAM) independently of cytokinin signaling pathway. Modulates responses to ABA, oxidative stress and abotic stress. Acts as a negative regulator of the ABA signaling pathway to modulate freezing and drought stress responses. Mediates carbon and amino acid metabolism. May be involved in the acquisition and/or maintenance of seed dormancy. Involved in the regulation of response to heat shock and plant defense. This Arabidopsis thaliana (Mouse-ear cress) protein is Probable glutamate carboxypeptidase AMP1.